The chain runs to 114 residues: Large ribosomal subunit protein uL22 (114 aa).

It belongs to the universal ribosomal protein uL22 family. Part of the 50S ribosomal subunit.

Its function is as follows. This protein binds specifically to 23S rRNA; its binding is stimulated by other ribosomal proteins, e.g. L4, L17, and L20. It is important during the early stages of 50S assembly. It makes multiple contacts with different domains of the 23S rRNA in the assembled 50S subunit and ribosome. The globular domain of the protein is located near the polypeptide exit tunnel on the outside of the subunit, while an extended beta-hairpin is found that lines the wall of the exit tunnel in the center of the 70S ribosome. This is Large ribosomal subunit protein uL22 from Streptococcus pyogenes serotype M5 (strain Manfredo).